The chain runs to 284 residues: Malonyl-[acyl-carrier protein] O-methyltransferase (284 aa).

Belongs to the methyltransferase superfamily.

The enzyme catalyses malonyl-[ACP] + S-adenosyl-L-methionine = malonyl-[ACP] methyl ester + S-adenosyl-L-homocysteine. The protein operates within cofactor biosynthesis; biotin biosynthesis. Functionally, converts the free carboxyl group of a malonyl-thioester to its methyl ester by transfer of a methyl group from S-adenosyl-L-methionine (SAM). It allows to synthesize pimeloyl-ACP via the fatty acid synthetic pathway. In Legionella pneumophila subsp. pneumophila (strain Philadelphia 1 / ATCC 33152 / DSM 7513), this protein is Malonyl-[acyl-carrier protein] O-methyltransferase.